The following is a 908-amino-acid chain: Protein translocase subunit SecA (908 aa).

Residues Q87, 105–109, and D512 each bind ATP; that span reads GEGKT. The interval 882–908 is disordered; it reads DGEKVGRNDPCPCGSGKKYKQCHGKLT. Positions 892, 894, 903, and 904 each coordinate Zn(2+). Over residues 898 to 908 the composition is skewed to basic residues; that stretch reads KKYKQCHGKLT.

It belongs to the SecA family. In terms of assembly, monomer and homodimer. Part of the essential Sec protein translocation apparatus which comprises SecA, SecYEG and auxiliary proteins SecDF-YajC and YidC. Zn(2+) is required as a cofactor.

It is found in the cell inner membrane. The protein localises to the cytoplasm. The catalysed reaction is ATP + H2O + cellular proteinSide 1 = ADP + phosphate + cellular proteinSide 2.. Its function is as follows. Part of the Sec protein translocase complex. Interacts with the SecYEG preprotein conducting channel. Has a central role in coupling the hydrolysis of ATP to the transfer of proteins into and across the cell membrane, serving both as a receptor for the preprotein-SecB complex and as an ATP-driven molecular motor driving the stepwise translocation of polypeptide chains across the membrane. In Shewanella amazonensis (strain ATCC BAA-1098 / SB2B), this protein is Protein translocase subunit SecA.